A 282-amino-acid polypeptide reads, in one-letter code: Probable metal transport system membrane protein TM_0125 (282 aa).

A run of 9 helical transmembrane segments spans residues 33–53 (AFVGGILVASLSGLVSPIVVF), 58–78 (FIGDGTAHAVFAGLAAATLIG), 79–99 (ADHRLIAFATALLFAFAVSLF), 109–129 (AIGILLPFFMAVGVVLFSVSG), 148–168 (STDVAITAVVLALSVILTVVF), 184–204 (FYGIKTDLIRFLITSFIAITV), 210–230 (VVGVILTGALLILPGLVSKIF), 234–254 (FWSLTTISVIFSTGVFFAGFL), and 259–279 (LDLPPGPVIVIIAFVSFLPML).

This sequence belongs to the ABC-3 integral membrane protein family.

Its subcellular location is the cell inner membrane. Its function is as follows. Part of an ATP-driven transport system TM_0123/TM_0124/TM_0125 for a metal. The polypeptide is Probable metal transport system membrane protein TM_0125 (Thermotoga maritima (strain ATCC 43589 / DSM 3109 / JCM 10099 / NBRC 100826 / MSB8)).